A 219-amino-acid chain; its full sequence is Large ribosomal subunit protein uL16 (219 aa).

This sequence belongs to the universal ribosomal protein uL16 family. Component of the small ribosomal subunit. Mature ribosomes consist of a small (40S) and a large (60S) subunit. The 40S subunit contains about 33 different proteins and 1 molecule of RNA (18S). The 60S subunit contains about 49 different proteins and 3 molecules of RNA (25S, 5.8S and 5S).

The polypeptide is Large ribosomal subunit protein uL16 (RPL10) (Solanum melongena (Eggplant)).